Consider the following 395-residue polypeptide: MEEVFTAALESKIFRKRWVLLPDYVPDVLPHREAELRRLAEVLAPALRGEKPSNALLYGLTGTGKTAVARLVLRRLEARASSLGVLVKPIYVNARHRETPYRVASAIAEAVGVRVPFTGLSVGEVYERLVKRLSRLRGIYIIVLDEIDFLPKRPGGQDLLYRITRINQELGDRVWVSLVGITNSLGFVENLEPRVKSSLGEVELVFPPYTAPQLRDILETRAEEAFNPGVLDPDVVPLCAALAAREHGDARRALDLLRVAGEIAERRREERVRREHVYSARAEIERDRVSEVVRTLPLHAKLVLLSIMMLEDGGRPASTGEIYERYKELTSTLGLEHVTLRRVSGIISELDMLGIVKSRVVSRGRYGKTREVSLDADRLAVENALSEDPFVARLL.

Residues 63-67 (TGKTA), Tyr209, and Arg221 contribute to the ATP site.

The protein belongs to the CDC6/cdc18 family.

Its function is as follows. Involved in regulation of DNA replication. Binds DNA. This chain is ORC1-type DNA replication protein 1 (orc1), found in Aeropyrum pernix (strain ATCC 700893 / DSM 11879 / JCM 9820 / NBRC 100138 / K1).